The sequence spans 303 residues: Putative S-adenosyl-L-methionine-dependent methyltransferase MAP_4197c (303 aa).

Residues Asp-129 and 158–159 (DL) contribute to the S-adenosyl-L-methionine site.

The protein belongs to the UPF0677 family.

In terms of biological role, exhibits S-adenosyl-L-methionine-dependent methyltransferase activity. In Mycolicibacterium paratuberculosis (strain ATCC BAA-968 / K-10) (Mycobacterium paratuberculosis), this protein is Putative S-adenosyl-L-methionine-dependent methyltransferase MAP_4197c.